The sequence spans 287 residues: Undecaprenyl-diphosphatase (287 aa).

Transmembrane regions (helical) follow at residues 50–70 (PGVSVTAAIQLGSIAAVIAYF), 97–117 (LGFAMVVGTLPILVIGLGIKF), 131–151 (IPSIAIVSIVMALLLALAEQV), 160–180 (VVLGRDGLLVGLAQALALLPG), 206–226 (FLLGIPGITIAGLVELKDALA), 234–254 (LPLLVGIGSAAVVSWLAIDWL), and 264–284 (WLFVAYRLVFGLLLLVWWGVY).

This sequence belongs to the UppP family.

It localises to the cell inner membrane. The catalysed reaction is di-trans,octa-cis-undecaprenyl diphosphate + H2O = di-trans,octa-cis-undecaprenyl phosphate + phosphate + H(+). Its function is as follows. Catalyzes the dephosphorylation of undecaprenyl diphosphate (UPP). Confers resistance to bacitracin. The protein is Undecaprenyl-diphosphatase of Synechococcus sp. (strain CC9605).